The following is a 410-amino-acid chain: Phosphoglycerate kinase (410 aa).

Substrate is bound by residues 19–21 (DLN), R34, 57–60 (HQGK), R114, and R154. ATP contacts are provided by residues E332 and 358-361 (GGHS).

It belongs to the phosphoglycerate kinase family. Homodimer.

Its subcellular location is the cytoplasm. The catalysed reaction is (2R)-3-phosphoglycerate + ATP = (2R)-3-phospho-glyceroyl phosphate + ADP. It functions in the pathway carbohydrate degradation; glycolysis; pyruvate from D-glyceraldehyde 3-phosphate: step 2/5. This Pyrococcus horikoshii (strain ATCC 700860 / DSM 12428 / JCM 9974 / NBRC 100139 / OT-3) protein is Phosphoglycerate kinase (pgk).